A 125-amino-acid polypeptide reads, in one-letter code: Small ribosomal subunit protein eS6 (125 aa).

A disordered region spans residues 90-109 (KGPGFRPKEKGERRKKTVRG).

It belongs to the eukaryotic ribosomal protein eS6 family. As to quaternary structure, part of the 30S ribosomal subunit.

The sequence is that of Small ribosomal subunit protein eS6 from Pyrococcus furiosus (strain ATCC 43587 / DSM 3638 / JCM 8422 / Vc1).